A 250-amino-acid chain; its full sequence is MVSIMLLKVEDLHVYRGNREILKGVNLTVEENEIHAIIGPNGAGKSTLAYTIMGISGYKPTKGRIIFKGVDIIDKNITERARMGMTLAWQEPARFEGIKVKNYLMLGMNEKYKKDKEIAEEKIREALKLVNLDPDKYLDRYVDETLSGGERKRIELASIICMEPDLAILDEPDSGIDIVSFDEIKRVFDYLKDKGCSLLVITHREELAEHADRVSLICAGEVIKSGDPKEVGEFYKKECGKCYKKVPDGK.

Positions 7–244 (LKVEDLHVYR…YKKECGKCYK (238 aa)) constitute an ABC transporter domain. Residue 39 to 46 (GPNGAGKS) coordinates ATP.

It belongs to the ABC transporter superfamily.

This is an uncharacterized protein from Methanocaldococcus jannaschii (strain ATCC 43067 / DSM 2661 / JAL-1 / JCM 10045 / NBRC 100440) (Methanococcus jannaschii).